We begin with the raw amino-acid sequence, 390 residues long: Tuftelin (390 aa).

Coiled coils occupy residues 88–126 and 162–351; these read DKMI…KLDR and DTCI…IEKQ. The segment at 358-390 is disordered; the sequence is STQARAKTENPGSIRISKPPSPKPMPVIRVVET.

The protein belongs to the tuftelin family. Interacts with TFIP11. As to expression, expressed in the epidermis (at protein level). Present in the extracellular enamel and is mainly associated with the crystal component.

It localises to the secreted. Its function is as follows. Involved in the structural organization of the epidermis. Involved in the mineralization and structural organization of enamel. The chain is Tuftelin (TUFT1) from Homo sapiens (Human).